A 2329-amino-acid polypeptide reads, in one-letter code: Pre-mRNA-splicing factor 8 homolog (2329 aa).

The segment at M1–P53 is disordered. Residues R34–P53 are compositionally biased toward basic and acidic residues. The tract at residues T804–L1295 is reverse transcriptase homology domain. The interval N1296–F1570 is linker. An important for branch point selection region spans residues M1506–L1519. The tract at residues L1574 to Q1745 is restriction endonuclease homology domain. An RNase H homology domain region spans residues N1760–S2013. The region spanning T2096 to G2227 is the MPN domain.

As to quaternary structure, part of the U5 snRNP complex and of the U4/U6-U5 tri-snRNP complex.

The protein localises to the nucleus. Functions as a scaffold that mediates the ordered assembly of spliceosomal proteins and snRNAs. Required for the assembly of the U4/U6-U5 tri-snRNP complex. Functions as a scaffold that positions spliceosomal U2, U5 and U6 snRNAs at splice sites on pre-mRNA substrates, so that splicing can occur. Interacts with both the 5' and the 3' splice site. The chain is Pre-mRNA-splicing factor 8 homolog (prp-8) from Caenorhabditis elegans.